The sequence spans 311 residues: p-hydroxybenzoic acid efflux pump subunit AaeA (311 aa).

Residues 11-31 (VGITVLVVVLAVIAIFNVWAF) traverse the membrane as a helical segment.

It belongs to the membrane fusion protein (MFP) (TC 8.A.1) family.

The protein resides in the cell inner membrane. Forms an efflux pump with AaeB. In Yersinia pseudotuberculosis serotype O:1b (strain IP 31758), this protein is p-hydroxybenzoic acid efflux pump subunit AaeA.